A 794-amino-acid chain; its full sequence is Copper amine oxidase-like protein cao2 (794 aa).

Residues 307 to 318 (AYDLGEYGVGYR) and 391 to 396 (AANYEY) contribute to the substrate site. The active-site Proton acceptor is D309. Catalysis depends on Y394, which acts as the Schiff-base intermediate with substrate; via topaquinone. Y394 carries the 2',4',5'-topaquinone modification. Residues H445 and H447 each contribute to the Cu cation site. The interval 563-584 (GDYAPQASDDTPKGLSKWISDD) is disordered. D593 and I594 together coordinate Mn(2+). H604 is a Cu cation binding site. Residues 634–748 (ALDTSSSVNS…NGGHHHHHHH (115 aa)) are disordered. Residues 637–649 (TSSSVNSTSEATS) show a composition bias toward low complexity. Over residues 652–714 (THHENLRDTS…DAAQKHEGRS (63 aa)) the composition is skewed to basic and acidic residues. Positions 716-727 (TLAQPGQQNANQ) are enriched in polar residues.

Belongs to the copper/topaquinone oxidase family. Homodimer. The cofactor is Cu cation. It depends on Zn(2+) as a cofactor. L-topaquinone is required as a cofactor. Requires Mn(2+) as cofactor. In terms of processing, topaquinone (TPQ) is generated by copper-dependent autoxidation of a specific tyrosyl residue.

The protein resides in the cytoplasm. It carries out the reaction a primary methyl amine + O2 + H2O = an aldehyde + H2O2 + NH4(+). Functionally, copper amine oxidase-like protein that does not show any copper amine oxidase activity. May be the appropriate amine substrate for cao2 has not been identified yet. The sequence is that of Copper amine oxidase-like protein cao2 (cao2) from Schizosaccharomyces pombe (strain 972 / ATCC 24843) (Fission yeast).